The sequence spans 396 residues: Methionine import ATP-binding protein MetN 2 (396 aa).

The ABC transporter domain maps to 41-280; it reads VSFELVGKVF…PRHGATRALL (240 aa). 77–84 contributes to the ATP binding site; sequence GRSGAGKS.

Belongs to the ABC transporter superfamily. Methionine importer (TC 3.A.1.24) family. As to quaternary structure, the complex is composed of two ATP-binding proteins (MetN), two transmembrane proteins (MetI) and a solute-binding protein (MetQ).

The protein resides in the cell inner membrane. The catalysed reaction is L-methionine(out) + ATP + H2O = L-methionine(in) + ADP + phosphate + H(+). The enzyme catalyses D-methionine(out) + ATP + H2O = D-methionine(in) + ADP + phosphate + H(+). Its function is as follows. Part of the ABC transporter complex MetNIQ involved in methionine import. Responsible for energy coupling to the transport system. This chain is Methionine import ATP-binding protein MetN 2, found in Burkholderia mallei (strain ATCC 23344).